The sequence spans 500 residues: Glucose-6-phosphate 1-dehydrogenase (500 aa).

NADP(+) contacts are provided by residues 18-25 (GASGDLSK), Arg52, and Lys155. D-glucose 6-phosphate is bound by residues Lys155, 185–189 (HYLGK), Glu223, and Asp242. The active-site Proton acceptor is His247. Residue Lys338 participates in NADP(+) binding. Lys341 provides a ligand contact to D-glucose 6-phosphate. 3 residues coordinate NADP(+): Lys347, Arg351, and Arg373. Gln375 contacts D-glucose 6-phosphate. NADP(+) contacts are provided by residues 381–383 (YFK), 401–403 (DLT), and Tyr483.

This sequence belongs to the glucose-6-phosphate dehydrogenase family.

It is found in the cytoplasm. Its subcellular location is the cytosol. It carries out the reaction D-glucose 6-phosphate + NADP(+) = 6-phospho-D-glucono-1,5-lactone + NADPH + H(+). It functions in the pathway carbohydrate degradation; pentose phosphate pathway; D-ribulose 5-phosphate from D-glucose 6-phosphate (oxidative stage): step 1/3. Functionally, catalyzes the rate-limiting step of the oxidative pentose-phosphate pathway, which represents a route for the dissimilation of carbohydrates besides glycolysis. The main function of this enzyme is to provide reducing power (NADPH) and pentose phosphates for fatty acid and nucleic acid synthesis. The protein is Glucose-6-phosphate 1-dehydrogenase of Schizosaccharomyces pombe (strain 972 / ATCC 24843) (Fission yeast).